A 585-amino-acid polypeptide reads, in one-letter code: Amyloid protein-binding protein 2 (585 aa).

8 TPR repeats span residues 50-83, 120-153, 206-239, 288-321, 333-367, 429-462, 471-505, and 514-547; these read QGRL…HHCF, IQVG…CTLH, AALY…ITAG, SDTL…RQSV, HEDL…ITHI, AKHY…KEQL, ALSV…GKKL, and EYDY…NRLR.

As to quaternary structure, component of a CRL2 E3 ubiquitin-protein ligase complex, also named ECS (Elongin BC-CUL2/5-SOCS-box protein) complex, composed of CUL2, Elongin BC (ELOB and ELOC), RBX1 and substrate-specific adapter APPBP2. Interacts with APP; APP interaction inhibits the E3 ubiquitin-protein ligase activity of the CRL2(APPBP2) complex. In terms of processing, rapidly degraded by the proteasome upon overexpression of a C-terminal fragment of APP.

The protein localises to the nucleus. The protein resides in the cytoplasm. It localises to the cytoskeleton. Its subcellular location is the membrane. Its pathway is protein modification; protein ubiquitination. Its activity is regulated as follows. E3 ubiquitin-protein ligase activity of the CRL2(APPBP2) complex is inhibited by APP. Functionally, substrate-recognition component of a Cul2-RING (CRL2) E3 ubiquitin-protein ligase complex of the DesCEND (destruction via C-end degrons) pathway, which recognizes a C-degron located at the extreme C terminus of target proteins, leading to their ubiquitination and degradation. The C-degron recognized by the DesCEND pathway is usually a motif of less than ten residues and can be present in full-length proteins, truncated proteins or proteolytically cleaved forms. The CRL2(APPBP2) complex specifically recognizes proteins with a -Arg-Xaa-Xaa-Gly degron at the C-terminus, leading to their ubiquitination and degradation. The CRL2(APPBP2) complex mediates ubiquitination and degradation of truncated SELENOV selenoproteins produced by failed UGA/Sec decoding, which end with a -Arg-Xaa-Xaa-Gly degron. May play a role in intracellular protein transport: may be involved in the translocation of APP along microtubules toward the cell surface. The chain is Amyloid protein-binding protein 2 from Homo sapiens (Human).